Here is a 610-residue protein sequence, read N- to C-terminus: UvrABC system protein C (610 aa).

In terms of domain architecture, GIY-YIG spans 16-94 (SQPGVYRMYD…IKLYQPRYNV (79 aa)). Residues 204–239 (QQVLTQLITRMEEASQQLHFEDAARIRDQIQAVRRV) enclose the UVR domain.

The protein belongs to the UvrC family. In terms of assembly, interacts with UvrB in an incision complex.

It is found in the cytoplasm. Its function is as follows. The UvrABC repair system catalyzes the recognition and processing of DNA lesions. UvrC both incises the 5' and 3' sides of the lesion. The N-terminal half is responsible for the 3' incision and the C-terminal half is responsible for the 5' incision. The protein is UvrABC system protein C of Yersinia pseudotuberculosis serotype O:1b (strain IP 31758).